The following is a 505-amino-acid chain: uncharacterized protein (505 aa).

A run of 14 helical transmembrane segments spans residues 9–29 (ANLT…PFIV), 49–69 (YFSV…SVAA), 86–106 (AASV…AFFI), 122–142 (LSIL…GFGA), 156–176 (IQAV…ACFA), 181–201 (QIQL…FYFF), 235–255 (IGVL…LGAS), 261–281 (AAII…ASLF), 310–330 (LLLA…LTIW), 341–361 (LLFI…LFYI), 371–391 (PAIV…TLSG), 395–415 (LGLY…NAIF), 435–455 (IIGP…IQFI), and 464–484 (LIAT…MLVC).

It is found in the cell membrane. May be involved in the production of the exopolysaccharide (EPS) component of the extracellular matrix during biofilm formation. EPS is responsible for the adhesion of chains of cells into bundles. This is an uncharacterized protein from Bacillus subtilis (strain 168).